A 382-amino-acid polypeptide reads, in one-letter code: Carbamoyl phosphate synthase small chain (382 aa).

The tract at residues 1 to 189 is CPSase; that stretch reads MIKSALLVLE…GLPEAKKEDE (189 aa). Residues Ser-47, Gly-241, and Gly-243 each coordinate L-glutamine. The region spanning 193–380 is the Glutamine amidotransferase type-1 domain; sequence HVVAYDFGAK…IALIEQYRKT (188 aa). Cys-269 functions as the Nucleophile in the catalytic mechanism. The L-glutamine site is built by Leu-270, Gln-273, Asn-311, Gly-313, and Phe-314. Active-site residues include His-353 and Glu-355.

This sequence belongs to the CarA family. As to quaternary structure, composed of two chains; the small (or glutamine) chain promotes the hydrolysis of glutamine to ammonia, which is used by the large (or ammonia) chain to synthesize carbamoyl phosphate. Tetramer of heterodimers (alpha,beta)4.

The enzyme catalyses hydrogencarbonate + L-glutamine + 2 ATP + H2O = carbamoyl phosphate + L-glutamate + 2 ADP + phosphate + 2 H(+). The catalysed reaction is L-glutamine + H2O = L-glutamate + NH4(+). It participates in amino-acid biosynthesis; L-arginine biosynthesis; carbamoyl phosphate from bicarbonate: step 1/1. The protein operates within pyrimidine metabolism; UMP biosynthesis via de novo pathway; (S)-dihydroorotate from bicarbonate: step 1/3. Functionally, small subunit of the glutamine-dependent carbamoyl phosphate synthetase (CPSase). CPSase catalyzes the formation of carbamoyl phosphate from the ammonia moiety of glutamine, carbonate, and phosphate donated by ATP, constituting the first step of 2 biosynthetic pathways, one leading to arginine and/or urea and the other to pyrimidine nucleotides. The small subunit (glutamine amidotransferase) binds and cleaves glutamine to supply the large subunit with the substrate ammonia. The sequence is that of Carbamoyl phosphate synthase small chain from Escherichia coli O6:H1 (strain CFT073 / ATCC 700928 / UPEC).